The chain runs to 648 residues: Macrolide export ATP-binding/permease protein MacB (648 aa).

Positions 5-243 (LELKDIRRSY…AGGTEPVVNT (239 aa)) constitute an ABC transporter domain. 41-48 (GASGSGKS) is a binding site for ATP. 4 helical membrane-spanning segments follow: residues 273–293 (LLTMLGIIIGIASVVSIVVVG), 523–543 (LFLTLVAVISLVVGGIGVMNI), 576–596 (AVLVCLVGGALGITLSLLIAF), and 600–620 (LFLPGWEIGFSPLALLLAFLC).

Belongs to the ABC transporter superfamily. Macrolide exporter (TC 3.A.1.122) family. As to quaternary structure, homodimer. Part of the tripartite efflux system MacAB-TolC, which is composed of an inner membrane transporter, MacB, a periplasmic membrane fusion protein, MacA, and an outer membrane component, TolC. The complex forms a large protein conduit and can translocate molecules across both the inner and outer membranes. Interacts with MacA.

It localises to the cell inner membrane. Functionally, part of the tripartite efflux system MacAB-TolC. MacB is a non-canonical ABC transporter that contains transmembrane domains (TMD), which form a pore in the inner membrane, and an ATP-binding domain (NBD), which is responsible for energy generation. Confers resistance against macrolides. In Shigella flexneri, this protein is Macrolide export ATP-binding/permease protein MacB.